We begin with the raw amino-acid sequence, 86 residues long: MKVSVLITLAVLGVMFVWASAAELEERGSDQRDSPAWLKSMERIFQSGERECRKMFGGCSVDSDCCAHLGCKPTLKYCAWDGTFGK.

The signal sequence occupies residues 1-21; that stretch reads MKVSVLITLAVLGVMFVWASA. A propeptide spanning residues 22 to 50 is cleaved from the precursor; sequence AELEERGSDQRDSPAWLKSMERIFQSGER. Intrachain disulfides connect C52–C66, C59–C71, and C65–C78. An involved in active face region spans residues 55–56; the sequence is MF. The residue at position 84 (F84) is a Phenylalanine amide.

Belongs to the neurotoxin 10 (Hwtx-1) family. 28 (Jztx-11) subfamily. As to expression, expressed by the venom gland.

It localises to the secreted. In terms of biological role, this toxin acts as a voltage-dependent gating-modifier. It inhibits the sodium conductance (IC(50)=124 nM) and slows the fast inactivation (EC(50)=1180 nM) of Nav1.5/SCN5A. It significantly shifts the activation to more depolarized voltages and decreases the deactivation of Nav1.5 currents upon extreme depolarization, but only slightly affects voltage-dependence of steady-state inactivation. In addition, this toxin causes an approximately five-fold decrease in the rate of recovery from inactivation and an approximately 1.9-fold reduction in the closed-state inactivation rate. This toxin integrates the functions of site 3 toxins (alpha-scorpion toxins) with site 4 toxins (beta-scorpion and spider toxins) by targeting multiple sites on Nav1.5. Also shows inhibition of voltage-gated potassium channels (5 uM completely inhibits Kv2.1/KCNB1, whereas 5 uM moderately inhibits Kv4.2/KCND2 Kv4.1/KCND1 channels). The chain is Kappa-theraphotoxin-Cg1a 1 from Chilobrachys guangxiensis (Chinese earth tiger tarantula).